We begin with the raw amino-acid sequence, 201 residues long: Prostamide/prostaglandin F synthase (201 aa).

Belongs to the peroxiredoxin-like PRXL2 family. Prostamide/prostaglandin F synthase subfamily.

It localises to the cytoplasm. The protein localises to the cytosol. It catalyses the reaction prostaglandin H2 + [thioredoxin]-dithiol = prostaglandin F2alpha + [thioredoxin]-disulfide. The enzyme catalyses prostamide F2alpha + [thioredoxin]-disulfide = prostamide H2 + [thioredoxin]-dithiol. Its function is as follows. Catalyzes the reduction of prostaglandin-ethanolamide H(2) (prostamide H(2)) to prostamide F(2alpha) with NADPH as proton donor. Also able to reduce prostaglandin H(2) to prostaglandin F(2alpha). In Aquarana catesbeiana (American bullfrog), this protein is Prostamide/prostaglandin F synthase (prxl2b).